Consider the following 130-residue polypeptide: MKDWLDEIHWNSDGLVPAIAQDHKTGRVLMMAWMNREALSLTASENRAIYWSRSRGKLWRKGEESGHVQKLHELRLDCDADVIILMVEQIGGIACHTGRESCFYRVYENSGWKTVDPVLKDPDAIYSAGH.

Residue Asp77 participates in Mg(2+) binding. Cys78 is a Zn(2+) binding site. The Mg(2+) site is built by Asp79 and Asp81. Cys95 and Cys102 together coordinate Zn(2+).

Belongs to the PRA-CH family. Homodimer. Mg(2+) serves as cofactor. Zn(2+) is required as a cofactor.

Its subcellular location is the cytoplasm. The enzyme catalyses 1-(5-phospho-beta-D-ribosyl)-5'-AMP + H2O = 1-(5-phospho-beta-D-ribosyl)-5-[(5-phospho-beta-D-ribosylamino)methylideneamino]imidazole-4-carboxamide. It participates in amino-acid biosynthesis; L-histidine biosynthesis; L-histidine from 5-phospho-alpha-D-ribose 1-diphosphate: step 3/9. Catalyzes the hydrolysis of the adenine ring of phosphoribosyl-AMP. In Pseudomonas savastanoi pv. phaseolicola (strain 1448A / Race 6) (Pseudomonas syringae pv. phaseolicola (strain 1448A / Race 6)), this protein is Phosphoribosyl-AMP cyclohydrolase.